The chain runs to 377 residues: Transmembrane 6 superfamily member 2 (377 aa).

9 helical membrane-spanning segments follow: residues 10–30 (IAAL…VSAL), 34–54 (LWVA…VYSL), 63–83 (PLYA…IIAL), 111–131 (FICY…AGAI), 140–160 (FGLY…TGNI), 170–190 (PAFF…MKVF), 219–239 (LALV…GLVV), 269–289 (MLMY…ALTF), and 332–352 (TWGC…LLAY). 2 EXPERA domains span residues 61 to 186 (YDPL…CWAG) and 217 to 351 (ADLA…HLLA).

This sequence belongs to the TM6SF family. As to expression, substantial expression in liver and intestine, whereas all other tissues analyzed show low levels.

It localises to the endoplasmic reticulum membrane. It is found in the endoplasmic reticulum-Golgi intermediate compartment membrane. In terms of biological role, regulator of liver fat metabolism influencing triglyceride secretion and hepatic lipid droplet content. May function as sterol isomerase. This is Transmembrane 6 superfamily member 2 (TM6SF2) from Homo sapiens (Human).